The sequence spans 362 residues: tRNA-specific 2-thiouridylase MnmA (362 aa).

ATP contacts are provided by residues 6 to 13 (AMSGGVDS) and L32. C101 functions as the Nucleophile in the catalytic mechanism. Residues C101 and C197 are joined by a disulfide bond. G125 serves as a coordination point for ATP. Residues 147–149 (KDQ) are interaction with tRNA. C197 (cysteine persulfide intermediate) is an active-site residue.

The protein belongs to the MnmA/TRMU family.

The protein localises to the cytoplasm. The catalysed reaction is S-sulfanyl-L-cysteinyl-[protein] + uridine(34) in tRNA + AH2 + ATP = 2-thiouridine(34) in tRNA + L-cysteinyl-[protein] + A + AMP + diphosphate + H(+). In terms of biological role, catalyzes the 2-thiolation of uridine at the wobble position (U34) of tRNA, leading to the formation of s(2)U34. This chain is tRNA-specific 2-thiouridylase MnmA, found in Acidothermus cellulolyticus (strain ATCC 43068 / DSM 8971 / 11B).